Reading from the N-terminus, the 495-residue chain is UDP-N-acetylmuramoyl-L-alanyl-D-glutamate--2,6-diaminopimelate ligase (495 aa).

UDP-N-acetyl-alpha-D-muramoyl-L-alanyl-D-glutamate-binding positions include leucine 27, serine 29, and 44–46 (HKA). 116–122 (GTNGKTT) provides a ligand contact to ATP. Residues asparagine 157, 158–159 (TT), serine 185, glutamine 191, and arginine 193 contribute to the UDP-N-acetyl-alpha-D-muramoyl-L-alanyl-D-glutamate site. Lysine 225 carries the N6-carboxylysine modification. Residues arginine 390, 414-417 (DNPR), glycine 465, and glutamate 469 each bind meso-2,6-diaminopimelate. A Meso-diaminopimelate recognition motif motif is present at residues 414 to 417 (DNPR).

It belongs to the MurCDEF family. MurE subfamily. The cofactor is Mg(2+). Post-translationally, carboxylation is probably crucial for Mg(2+) binding and, consequently, for the gamma-phosphate positioning of ATP.

The protein localises to the cytoplasm. It catalyses the reaction UDP-N-acetyl-alpha-D-muramoyl-L-alanyl-D-glutamate + meso-2,6-diaminopimelate + ATP = UDP-N-acetyl-alpha-D-muramoyl-L-alanyl-gamma-D-glutamyl-meso-2,6-diaminopimelate + ADP + phosphate + H(+). It participates in cell wall biogenesis; peptidoglycan biosynthesis. In terms of biological role, catalyzes the addition of meso-diaminopimelic acid to the nucleotide precursor UDP-N-acetylmuramoyl-L-alanyl-D-glutamate (UMAG) in the biosynthesis of bacterial cell-wall peptidoglycan. This chain is UDP-N-acetylmuramoyl-L-alanyl-D-glutamate--2,6-diaminopimelate ligase, found in Pectobacterium atrosepticum (strain SCRI 1043 / ATCC BAA-672) (Erwinia carotovora subsp. atroseptica).